Consider the following 666-residue polypeptide: 7SK snRNA methylphosphate capping enzyme (666 aa).

An N-acetylmethionine modification is found at M1. Residues 1–10 (MIEMAAEKEP) are compositionally biased toward basic and acidic residues. Residues 1-141 (MIEMAAEKEP…GSGGSFKHPA (141 aa)) form a disordered region. Over residues 50-61 (GPGPRAHSAGAA) the composition is skewed to low complexity. The residue at position 57 (S57) is a Phosphoserine. R91 is subject to Omega-N-methylarginine. A phosphoserine mark is found at S126, S150, and S154. T188 carries the post-translational modification Phosphothreonine. 3 positions are modified to phosphoserine: S191, S192, and S229. A compositionally biased stretch (basic residues) spans 235–244 (RKRHRHRGPH). Positions 235-291 (RKRHRHRGPHHQQQQQASGGNDSNAAVLPTDPLTPSLHGEGATQQQQNRGQNRDAPQ) are disordered. The span at 245-254 (HQQQQQASGG) shows a compositional bias: low complexity. Position 268 is a phosphothreonine (T268). Residues S307 and S321 each carry the phosphoserine modification. Residues 309–337 (LPSALQGSSGSLSAPPAASVTSAPSTSSS) show a composition bias toward low complexity. The tract at residues 309–383 (LPSALQGSSG…HHHPLPATGF (75 aa)) is disordered. Residues 338-347 (SRHRKRRRTS) are compositionally biased toward basic residues. S368 is subject to Phosphoserine. Residues Y399, R410, 428–430 (GCN), 451–452 (DI), 536–537 (NY), and F558 contribute to the S-adenosyl-L-methionine site. The Bin3-type SAM domain occupies 408 to 663 (DVRLRVLKPE…PVYLFHKARS (256 aa)). Residue K620 forms a Glycyl lysine isopeptide (Lys-Gly) (interchain with G-Cter in SUMO2) linkage.

This sequence belongs to the methyltransferase superfamily. As to quaternary structure, core component of the 7SK RNP complex, at least composed of 7SK RNA, LARP7, MEPCE, HEXIM1 (or HEXIM2) and P-TEFb (composed of CDK9 and CCNT1/cyclin-T1). Interacts with METTL16. Interacts with RBM7; upon genotoxic stress this interaction is enhanced, triggering the release of inactive P-TEFb complex from the core, yielding to P-TEFb complex activation. Dephosphorylated at Ser-126 by the PNUTS-PP1 complex, promoting RNA polymerase II transcription pause-release.

The protein localises to the nucleus. The catalysed reaction is a 5'-end triphospho-guanosine-ribonucleotide-snRNA + S-adenosyl-L-methionine = a 5'-end methyltriphosphate-guanosine-ribonucleotide-snRNA + S-adenosyl-L-homocysteine. Its function is as follows. S-adenosyl-L-methionine-dependent methyltransferase that adds a methylphosphate cap at the 5'-end of 7SK snRNA (7SK RNA), leading to stabilize it. Also has a non-enzymatic function as part of the 7SK RNP complex: the 7SK RNP complex sequesters the positive transcription elongation factor b (P-TEFb) in a large inactive 7SK RNP complex preventing RNA polymerase II phosphorylation and subsequent transcriptional elongation. The 7SK RNP complex also promotes snRNA gene transcription by RNA polymerase II via interaction with the little elongation complex (LEC). In the 7SK RNP complex, MEPCE is required to stabilize 7SK RNA and facilitate the assembly of 7SK RNP complex. MEPCE has a non-enzymatic function in the 7SK RNP complex; it has a non-enzymatic function; interaction with LARP7 within the 7SK RNP complex occluding its catalytic center. Also required for stability of U6 snRNAs. The polypeptide is 7SK snRNA methylphosphate capping enzyme (Mus musculus (Mouse)).